The following is a 64-amino-acid chain: DNA-directed RNA polymerase subunit Rpo10 (64 aa).

Residues cysteine 7, cysteine 10, cysteine 45, and cysteine 46 each coordinate Zn(2+).

It belongs to the archaeal Rpo10/eukaryotic RPB10 RNA polymerase subunit family. Part of the RNA polymerase complex. Zn(2+) is required as a cofactor.

The protein resides in the cytoplasm. The enzyme catalyses RNA(n) + a ribonucleoside 5'-triphosphate = RNA(n+1) + diphosphate. Its function is as follows. DNA-dependent RNA polymerase (RNAP) catalyzes the transcription of DNA into RNA using the four ribonucleoside triphosphates as substrates. This chain is DNA-directed RNA polymerase subunit Rpo10, found in Natronomonas pharaonis (strain ATCC 35678 / DSM 2160 / CIP 103997 / JCM 8858 / NBRC 14720 / NCIMB 2260 / Gabara) (Halobacterium pharaonis).